A 314-amino-acid chain; its full sequence is Porphobilinogen deaminase (314 aa).

At Cys234 the chain carries S-(dipyrrolylmethanemethyl)cysteine.

Belongs to the HMBS family. As to quaternary structure, monomer. Requires dipyrromethane as cofactor.

It catalyses the reaction 4 porphobilinogen + H2O = hydroxymethylbilane + 4 NH4(+). It participates in porphyrin-containing compound metabolism; protoporphyrin-IX biosynthesis; coproporphyrinogen-III from 5-aminolevulinate: step 2/4. In terms of biological role, tetrapolymerization of the monopyrrole PBG into the hydroxymethylbilane pre-uroporphyrinogen in several discrete steps. In Mycobacterium ulcerans (strain Agy99), this protein is Porphobilinogen deaminase.